We begin with the raw amino-acid sequence, 342 residues long: Succinylglutamate desuccinylase (342 aa).

3 residues coordinate Zn(2+): histidine 63, glutamate 66, and histidine 155. Residue glutamate 219 is part of the active site.

Belongs to the AspA/AstE family. Succinylglutamate desuccinylase subfamily. Zn(2+) serves as cofactor.

The catalysed reaction is N-succinyl-L-glutamate + H2O = L-glutamate + succinate. Its pathway is amino-acid degradation; L-arginine degradation via AST pathway; L-glutamate and succinate from L-arginine: step 5/5. In terms of biological role, transforms N(2)-succinylglutamate into succinate and glutamate. The protein is Succinylglutamate desuccinylase of Vibrio cholerae serotype O1 (strain ATCC 39315 / El Tor Inaba N16961).